We begin with the raw amino-acid sequence, 390 residues long: NADH-quinone oxidoreductase subunit D (390 aa).

This sequence belongs to the complex I 49 kDa subunit family. As to quaternary structure, NDH-1 is composed of 14 different subunits. Subunits NuoB, C, D, E, F, and G constitute the peripheral sector of the complex.

The protein localises to the cell inner membrane. The catalysed reaction is a quinone + NADH + 5 H(+)(in) = a quinol + NAD(+) + 4 H(+)(out). Its function is as follows. NDH-1 shuttles electrons from NADH, via FMN and iron-sulfur (Fe-S) centers, to quinones in the respiratory chain. The immediate electron acceptor for the enzyme in this species is believed to be ubiquinone. Couples the redox reaction to proton translocation (for every two electrons transferred, four hydrogen ions are translocated across the cytoplasmic membrane), and thus conserves the redox energy in a proton gradient. This Geobacter sulfurreducens (strain ATCC 51573 / DSM 12127 / PCA) protein is NADH-quinone oxidoreductase subunit D.